Here is a 476-residue protein sequence, read N- to C-terminus: Sulfate adenylyltransferase subunit 1 (476 aa).

The region spanning 24–240 is the tr-type G domain; it reads KSLLRFLTCG…LENVDIDRDK (217 aa). A G1 region spans residues 33–40; the sequence is GSVDDGKS. 33 to 40 serves as a coordination point for GTP; the sequence is GSVDDGKS. A G2 region spans residues 91-95; sequence GITID. Residues 112-115 form a G3 region; that stretch reads DTPG. GTP is bound by residues 112–116 and 167–170; these read DTPGH and NKMD. Positions 167 to 170 are G4; it reads NKMD. Positions 205–207 are G5; it reads SAL.

Belongs to the TRAFAC class translation factor GTPase superfamily. Classic translation factor GTPase family. CysN/NodQ subfamily. Heterodimer composed of CysD, the smaller subunit, and CysN.

The enzyme catalyses sulfate + ATP + H(+) = adenosine 5'-phosphosulfate + diphosphate. Its pathway is sulfur metabolism; hydrogen sulfide biosynthesis; sulfite from sulfate: step 1/3. With CysD forms the ATP sulfurylase (ATPS) that catalyzes the adenylation of sulfate producing adenosine 5'-phosphosulfate (APS) and diphosphate, the first enzymatic step in sulfur assimilation pathway. APS synthesis involves the formation of a high-energy phosphoric-sulfuric acid anhydride bond driven by GTP hydrolysis by CysN coupled to ATP hydrolysis by CysD. The protein is Sulfate adenylyltransferase subunit 1 of Vibrio cholerae serotype O1 (strain ATCC 39541 / Classical Ogawa 395 / O395).